Here is a 563-residue protein sequence, read N- to C-terminus: Coiled-coil domain-containing protein 38 (563 aa).

Residues 128 to 211 adopt a coiled-coil conformation; sequence TKKKTIKRFE…SIKSDIAKTE (84 aa). The tract at residues 265–310 is disordered; that stretch reads DNSIDSDKMSVSEEWSSRRGSQGGRHGKHTLGQDSRKSSGFTRPES. Residues 269–281 show a composition bias toward basic and acidic residues; sequence DSDKMSVSEEWSS. Coiled coils occupy residues 361 to 415 and 454 to 522; these read QDVD…RSRL and NAVQ…AVAQ. Positions 543-563 are disordered; it reads QELLLVSDTRSKSQDEEYFFS.

As to quaternary structure, interacts with CCDC42, CFAP53, IFT88 and ODF2. Interacts with CCDC146. Interacts with TEKT3. Interacts with ubiquitinated histone H2A. In terms of tissue distribution, expressed exclusively in testis where it is detected mainly in spermatogonia and spermatocytes (at protein level).

The protein localises to the cytoplasm. Its subcellular location is the cytoskeleton. It is found in the microtubule organizing center. It localises to the centrosome. The protein resides in the perinuclear region. The protein localises to the cell projection. Its subcellular location is the cilium. It is found in the flagellum. In terms of biological role, essential for male fertility. Required for sperm flagellum biogenesis. Also required for acrosome biogenesis. Required for the attachment of developing acrosomes to the nucleus during spermiogenesis and may be involved in the transport of fibrous sheath components. In Mus musculus (Mouse), this protein is Coiled-coil domain-containing protein 38 (Ccdc38).